Here is a 132-residue protein sequence, read N- to C-terminus: Small ribosomal subunit protein uS8 (132 aa).

The protein belongs to the universal ribosomal protein uS8 family. In terms of assembly, part of the 30S ribosomal subunit. Contacts proteins S5 and S12.

Its function is as follows. One of the primary rRNA binding proteins, it binds directly to 16S rRNA central domain where it helps coordinate assembly of the platform of the 30S subunit. The protein is Small ribosomal subunit protein uS8 of Bacillus mycoides (strain KBAB4) (Bacillus weihenstephanensis).